Reading from the N-terminus, the 433-residue chain is Trigger factor (433 aa).

A PPIase FKBP-type domain is found at glycine 163–proline 248.

This sequence belongs to the FKBP-type PPIase family. Tig subfamily.

Its subcellular location is the cytoplasm. The catalysed reaction is [protein]-peptidylproline (omega=180) = [protein]-peptidylproline (omega=0). In terms of biological role, involved in protein export. Acts as a chaperone by maintaining the newly synthesized protein in an open conformation. Functions as a peptidyl-prolyl cis-trans isomerase. This chain is Trigger factor, found in Staphylococcus aureus (strain COL).